We begin with the raw amino-acid sequence, 156 residues long: Type II secretion system core protein G (156 aa).

The propeptide at 1–22 (MQQSQRGCGQNSYGQSGYRQRG) is leader sequence. F23 is modified (N-methylphenylalanine). A helical membrane pass occupies residues 23–43 (FTLLEIMVVIVILGVLASLVV).

The protein belongs to the GSP G family. Type II secretion system is composed of four main components: the outer membrane complex, the inner membrane complex, the cytoplasmic secretion ATPase and the periplasm-spanning pseudopilus. Forms homomultimers. Cleaved by the prepilin peptidase. Post-translationally, methylated by prepilin peptidase at the amino group of the N-terminal phenylalanine once the leader sequence is cleaved.

The protein resides in the cell inner membrane. Its function is as follows. Core component of the type II secretion system required for the energy-dependent secretion of extracellular factors such as proteases and toxins from the periplasm. Pseudopilin (pilin-like) protein that polymerizes to form the pseudopilus. Further polymerization triggers pseudopilus growth. In Pectobacterium carotovorum subsp. carotovorum (Erwinia carotovora subsp. carotovora), this protein is Type II secretion system core protein G (outG).